The chain runs to 118 residues: Thioredoxin AMT13 (118 aa).

A Thioredoxin domain is found at 1–110 (MSDNKAIQTL…LEDAIRANLG (110 aa)). Residues Cys36 and Cys39 are joined by a disulfide bond.

It belongs to the thioredoxin family.

It functions in the pathway mycotoxin biosynthesis. In terms of biological role, thioredoxin; part of the gene clusters that mediate the biosynthesis of AM-toxins, host-selective toxins (HSTs) causing Alternaria blotch on apple, a worldwide distributed disease. AM-toxins are cyclic depsipeptides containing the 3 residues 2-hydroxy-isovaleric acid (2-HIV), dehydroalanine, L-alanine which are common for all 3 AM-toxins I to III. The fourth precursor is L-alpha-amino-methoxyphenyl-valeric acid (L-Amv) for AM-toxin I, L-alpha-amino-phenyl-valeric acid (L-Apv) for AM-toxin II, and L-alpha-amino-hydroxyphenyl-valeric acid (L-Ahv) for AM-toxin III. AM-toxins have two target sites for affecting susceptible apple cells; they cause invagination of the plasma membrane and electrolyte loss and chloroplast disorganization. The non-ribosomal peptide synthetase AMT1 contains 4 catalytic modules and is responsible for activation of each residue in AM-toxin. The aldo-keto reductase AMT2 catalyzes the conversion of 2-keto-isovaleric acid (2-KIV) to 2-hydroxy-isovaleric acid (2-HIV), one of the precursor residues incorporated by AMT1 during AM-toxin biosynthesis, by reduction of its ketone to an alcohol. The cytochrome P450 monooxygenase AMT3 and the thioesterase AMT4 are also important for AM-toxin production, but their exact function within the AM-toxin biosynthesis are not known yet. Up to 21 proteins (including AMT1 to AMT4) are predicted to be involved in AM-toxin biosynthesis since their expression ishighly up-regulated in AM-toxin-producing cultures. The polypeptide is Thioredoxin AMT13 (Alternaria alternata (Alternaria rot fungus)).